Here is a 213-residue protein sequence, read N- to C-terminus: Large ribosomal subunit protein uL3 (213 aa).

Residues 124–151 (KRHGQSRGPMAHGSRYHRRPGSMGSIAP) are disordered.

This sequence belongs to the universal ribosomal protein uL3 family. In terms of assembly, part of the 50S ribosomal subunit. Forms a cluster with proteins L14 and L19.

Its function is as follows. One of the primary rRNA binding proteins, it binds directly near the 3'-end of the 23S rRNA, where it nucleates assembly of the 50S subunit. The protein is Large ribosomal subunit protein uL3 of Geobacillus kaustophilus (strain HTA426).